Consider the following 419-residue polypeptide: GTPase Obg (419 aa).

Residues 1–156 (MRFVDYVSIE…FYLDLQLKVM (156 aa)) enclose the Obg domain. In terms of domain architecture, OBG-type G spans 157-334 (ADIGLVGKPN…LGENQKKLEI (178 aa)). Residues 163-170 (GKPNAGKS), 188-192 (FTTLV), 209-212 (DLPG), 278-281 (NKCD), and 315-317 (NII) contribute to the GTP site. 2 residues coordinate Mg(2+): serine 170 and threonine 190. The OCT domain maps to 342–419 (IEFNLKAPFL…RIYEFEFHWN (78 aa)).

This sequence belongs to the TRAFAC class OBG-HflX-like GTPase superfamily. OBG GTPase family. In terms of assembly, monomer. The cofactor is Mg(2+).

It localises to the cytoplasm. In terms of biological role, an essential GTPase which binds GTP, GDP and possibly (p)ppGpp with moderate affinity, with high nucleotide exchange rates and a fairly low GTP hydrolysis rate. Plays a role in control of the cell cycle, stress response, ribosome biogenesis and in those bacteria that undergo differentiation, in morphogenesis control. In Mesomycoplasma hyopneumoniae (strain 7448) (Mycoplasma hyopneumoniae), this protein is GTPase Obg.